The following is a 585-amino-acid chain: Serine/threonine-protein kinase PknI (585 aa).

At 1–349 (MALASGVTFA…ASPTRRRPRR (349 aa)) the chain is on the cytoplasmic side. The Protein kinase domain occupies 12–252 (YTVVRMLGCS…SCREFADAMN (241 aa)). Residues 18–26 (LGCSAMGEV) and K41 contribute to the ATP site. K41, D90, and V92 together coordinate ADP. D137 functions as the Proton acceptor in the catalytic mechanism. The helical transmembrane segment at 350–370 (ILVGAVAVLLLAGLFAVGIVI) threads the bilayer. Residues 371-585 (GRKTNTTATE…PTTTAPGPGR (215 aa)) are Extracellular-facing. The segment at 546 to 585 (SGDLPPAVTVPDPATIPDTPDTTSTATLTPPTTTAPGPGR) is disordered. Residues 554-585 (TVPDPATIPDTPDTTSTATLTPPTTTAPGPGR) are compositionally biased toward low complexity.

Belongs to the protein kinase superfamily. Ser/Thr protein kinase family. It depends on Mn(2+) as a cofactor. Autophosphorylated at serine and threonine residues.

Its subcellular location is the cytoplasm. The protein resides in the cell membrane. The catalysed reaction is L-seryl-[protein] + ATP = O-phospho-L-seryl-[protein] + ADP + H(+). It catalyses the reaction L-threonyl-[protein] + ATP = O-phospho-L-threonyl-[protein] + ADP + H(+). Plays an important role in slowing down the growth of mycobacteria within the infected host. The polypeptide is Serine/threonine-protein kinase PknI (pknI) (Mycobacterium bovis (strain ATCC BAA-935 / AF2122/97)).